Here is a 317-residue protein sequence, read N- to C-terminus: DNA-directed RNA polymerase subunit alpha (317 aa).

The interval 1–234 (MKQFVRPEFI…AHLEFFIDLN (234 aa)) is alpha N-terminal domain (alpha-NTD). Positions 250-317 (DKELDRTVEE…ASLGLAFRQS (68 aa)) are alpha C-terminal domain (alpha-CTD).

It belongs to the RNA polymerase alpha chain family. As to quaternary structure, homodimer. The RNAP catalytic core consists of 2 alpha, 1 beta, 1 beta' and 1 omega subunit. When a sigma factor is associated with the core the holoenzyme is formed, which can initiate transcription.

It carries out the reaction RNA(n) + a ribonucleoside 5'-triphosphate = RNA(n+1) + diphosphate. Its function is as follows. DNA-dependent RNA polymerase catalyzes the transcription of DNA into RNA using the four ribonucleoside triphosphates as substrates. In Mycoplasma mycoides subsp. mycoides SC (strain CCUG 32753 / NCTC 10114 / PG1), this protein is DNA-directed RNA polymerase subunit alpha.